Reading from the N-terminus, the 759-residue chain is Mitogen-activated protein kinase kinase kinase 1a (759 aa).

3 stretches are compositionally biased toward basic and acidic residues: residues methionine 1–serine 17, serine 25–lysine 36, and alanine 52–serine 64. Disordered regions lie at residues methionine 1 to lysine 90, leucine 122 to phenylalanine 160, serine 165 to methionine 184, and arginine 195 to leucine 239. The segment covering valine 72–serine 85 has biased composition (low complexity). In terms of domain architecture, Protein kinase spans tryptophan 426–isoleucine 679. Residues leucine 432–valine 440 and lysine 454 each bind ATP. The active-site Proton acceptor is the aspartate 549.

The protein belongs to the protein kinase superfamily. STE Ser/Thr protein kinase family. MAP kinase kinase kinase subfamily.

It is found in the cell membrane. The enzyme catalyses L-seryl-[protein] + ATP = O-phospho-L-seryl-[protein] + ADP + H(+). It catalyses the reaction L-threonyl-[protein] + ATP = O-phospho-L-threonyl-[protein] + ADP + H(+). The CERK1, MEKK1a/b, MKK1a/b/c and MPK4a/b proteins are involved in pathogen defense. The pathway induces rapid growth inhibition, cell wall depositions and accumulation of defense-related transcripts. This protein is required for responses to chitin and acts redundantly with MEKK1b. In Physcomitrium patens (Spreading-leaved earth moss), this protein is Mitogen-activated protein kinase kinase kinase 1a.